The chain runs to 575 residues: Putative diflavin flavoprotein A 4 (575 aa).

Positions 41-234 (QRGTTANSYL…LGARSYAPGH (194 aa)) are zinc metallo-hydrolase. Positions 263-405 (VALLYTSAYG…AGATFAQTLK (143 aa)) constitute a Flavodoxin-like domain. The segment at 429–575 (VGRIIGSLCV…AVEHRKSGSH (147 aa)) is flavodoxin-reductase-like.

It in the N-terminal section; belongs to the zinc metallo-hydrolase group 3 family. In the C-terminal section; belongs to the flavodoxin reductase family. Requires Fe cation as cofactor.

Functionally, mediates electron transfer from NADH to oxygen, reducing it to water. This modular protein has 3 redox cofactors, in other organisms the same activity requires 2 or 3 proteins. This is Putative diflavin flavoprotein A 4 (dfa4) from Nostoc sp. (strain PCC 7120 / SAG 25.82 / UTEX 2576).